The primary structure comprises 142 residues: Large ribosomal subunit protein uL11 (142 aa).

It belongs to the universal ribosomal protein uL11 family. In terms of assembly, part of the ribosomal stalk of the 50S ribosomal subunit. Interacts with L10 and the large rRNA to form the base of the stalk. L10 forms an elongated spine to which L12 dimers bind in a sequential fashion forming a multimeric L10(L12)X complex. Post-translationally, one or more lysine residues are methylated.

In terms of biological role, forms part of the ribosomal stalk which helps the ribosome interact with GTP-bound translation factors. This is Large ribosomal subunit protein uL11 from Bartonella tribocorum (strain CIP 105476 / IBS 506).